The primary structure comprises 245 residues: Acetoacetate decarboxylase (245 aa).

K116 acts as the Schiff-base intermediate with acetoacetate in catalysis.

This sequence belongs to the ADC family.

The catalysed reaction is acetoacetate + H(+) = acetone + CO2. Functionally, catalyzes the conversion of acetoacetate to acetone and carbon dioxide. This Acidiphilium cryptum (strain JF-5) protein is Acetoacetate decarboxylase.